Here is a 600-residue protein sequence, read N- to C-terminus: Monooxygenase ptmN (600 aa).

The protein belongs to the FMO family. The cofactor is FAD.

The protein operates within secondary metabolite biosynthesis. Functionally, monooxygenase; part of the gene cluster that mediates the biosynthesis of the indole diterpenes penitrems. The geranylgeranyl diphosphate (GGPP) synthase ptmG catalyzes the first step in penitrem biosynthesis via conversion of farnesyl pyrophosphate and isopentyl pyrophosphate into geranylgeranyl pyrophosphate (GGPP). Condensation of indole-3-glycerol phosphate with GGPP by the prenyl transferase ptmC then forms 3-geranylgeranylindole (3-GGI). Epoxidation by the FAD-dependent monooxygenase ptmM leads to a epoxidized-GGI that is substrate of the terpene cyclase ptmB for cyclization to yield paspaline. Paspaline is subsequently converted to 13-desoxypaxilline by the cytochrome P450 monooxygenase ptmP, the latter being then converted to paxilline by the cytochrome P450 monooxygenase ptmQ. Paxilline is converted to beta-paxitriol via C-10 ketoreduction by the short-chain dehydrogenase ptmH which can be monoprenylated at the C-20 by the indole diterpene prenyltransferase ptmD. A two-step elimination (acetylation and elimination) process performed by the O-acetyltransferase ptmV and ptmI leads to the production of the prenylated form of penijanthine. The FAD-linked oxidoreductase ptmO then converts the prenylated form of penijanthine into PC-M5 which is in turn transformed into PC-M4 by the aromatic dimethylallyltransferase ptmE. Five sequential oxidative transformations performed by the cytochrome P450 monooxygenases ptmK, ptmU, ptmL, ptmN and ptmJ yield the various penitrem compounds. PtmK, ptmU and ptmM are involved in the formation of the key bicyclic ring of penitrem C via the formation of the intermediates secopenitrem D and penitrem D. PtmL catalyzes the epoxidation of penitrem D and C to yield penitrem B and F, respectively. PtmJ catalyzes the last benzylic hydroxylation to convert penitrem B to prenitrem E and penitrem F to penitrem A. The sequence is that of Monooxygenase ptmN from Penicillium ochrochloron.